We begin with the raw amino-acid sequence, 247 residues long: VQ motif-containing protein 4 (247 aa).

Positions 1–128 (MENSPRYREA…SSSSASGFRL (128 aa)) are disordered. Residue Ser16 is modified to Phosphoserine. Residues 21–37 (NSNNSCGMSSSSESNKP) show a composition bias toward low complexity. Polar residues-rich tracts occupy residues 48–75 (RSESGNPYPTTFVQADTSSFKQVVQMLT) and 87–106 (LKPNPTHHQPDPRSTPSSFS). Residues 67-76 (FKQVVQMLTG) carry the VQ motif. 5 positions are modified to phosphoserine: Ser106, Ser155, Ser163, Ser165, and Ser175. Thr178 carries the post-translational modification Phosphothreonine. The tract at residues 184 to 247 (PFDRSGSSNQ…VSGSSSASTS (64 aa)) is disordered. Ser194 bears the Phosphoserine mark. Residues 200–210 (AEEKAMKERGF) are compositionally biased toward basic and acidic residues. Ser215 is subject to Phosphoserine. Thr219 and Thr234 each carry phosphothreonine. A phosphoserine mark is found at Ser235, Ser239, and Ser243. The segment covering 236-247 (PRVSGSSSASTS) has biased composition (polar residues).

In terms of assembly, interacts with MPK3 and MPK6. Post-translationally, phosphorylated on serine and threonine residues by MPK6 following treatment with the pathogen-associated molecular pattern (PAMP) flg22. MAP kinase-mediated phosphorylation after PAMP elicitation causes degradation of VQ4, allowing WRKY33 to promote transcription from defense genes.

Its subcellular location is the nucleus. Acts as a negative regulator of WRKY33 transcription factor activity in the promotion of defense gene expression. Acts as a negative regulator of pathogen-associated molecular pattern (PAMP)-induced responses to modulate resistance to pathogens. In Arabidopsis thaliana (Mouse-ear cress), this protein is VQ motif-containing protein 4.